The sequence spans 1290 residues: 1-phosphatidylinositol 4,5-bisphosphate phosphodiesterase gamma-1 (1290 aa).

Ala-2 is subject to N-acetylalanine. The PH 1 domain occupies 27 to 142 (RSLEVGTVMT…WIKGLTWLME (116 aa)). One can recognise an EF-hand domain in the interval 152–187 (QIERWLRKQFYSVDRNREDRISAKDLKNMLSQVNYR). The Ca(2+) site is built by Asp-165, Asn-167, Glu-169, Arg-171, and Asp-176. The PI-PLC X-box domain maps to 320-464 (ETMNNPLSHY…LKRKILIKHK (145 aa)). Catalysis depends on residues His-335 and His-380. A PH 2; first part domain is found at 489 to 523 (SIKNGILYLEDPVNHEWYPHYFVLTSSKIYYSEET). Tyr-506 is modified (phosphotyrosine). Residues 522 to 546 (ETSSDQGNEDEEEPKEASGSTELHS) form a disordered region. SH2 domains lie at 550-657 (WFHG…SEPV) and 668-756 (WYHA…RYPI). Position 771 is a phosphotyrosine; by SYK (Tyr-771). Tyr-775 carries the phosphotyrosine modification. The residue at position 783 (Tyr-783) is a Phosphotyrosine; by ITK, SYK and TXK. Residues 791–851 (TFKCAVKALF…PSNYVEEMIN (61 aa)) enclose the SH3 domain. The PH 2; second part domain occupies 895–931 (FVFSISMPSVAQWSLDVAADSQEELQDWVKKIREVAQ). The 118-residue stretch at 953–1070 (LSELVVYCRP…GYVLQPSTMR (118 aa)) folds into the PI-PLC Y-box domain. Residue Tyr-977 is modified to Phosphotyrosine. Positions 1071–1194 (DEAFDPFDKS…TGYRAVPLKN (124 aa)) constitute a C2 domain. A phosphoserine mark is found at Ser-1221, Ser-1227, Ser-1233, and Ser-1248. Position 1253 is a phosphotyrosine (Tyr-1253). Position 1263 is a phosphoserine (Ser-1263). A disordered region spans residues 1271–1290 (FDSRERRAPRRTRVNGDNRL).

In terms of assembly, interacts with AGAP2 via its SH3 domain. Interacts (via SH2 domain) with RET. Interacts with FLT1 (tyrosine-phosphorylated). Interacts (via SH2 domain) with FGFR1, FGFR2, FGFR3 and FGFR4 (phosphorylated). Interacts with LAT (phosphorylated) upon TCR activation. Interacts (via SH3 domain) with the Pro-rich domain of TNK1. Associates with BLNK, VAV1, GRB2 and NCK1 in a B-cell antigen receptor-dependent fashion. Interacts with CBLB in activated T-cells; which inhibits phosphorylation. Interacts with SHB. Interacts (via SH3 domain) with the Arg/Gly-rich-flanked Pro-rich domains of KHDRBS1/SAM68. This interaction is selectively regulated by arginine methylation of KHDRBS1/SAM68. Interacts with INPP5D/SHIP1, THEMIS and CLNK. Interacts with AXL, FLT4 and KIT. Interacts with RALGPS1. Interacts (via the SH2 domains) with VIL1 (phosphorylated at C-terminus tyrosine phosphorylation sites). Interacts (via SH2 domain) with PDGFRA and PDGFRB (tyrosine phosphorylated). Interacts with PIP5K1C. Interacts with NTRK1 and NTRK2 (phosphorylated upon ligand-binding). Interacts with SYK; activates PLCG1. Interacts with GRB2, LAT and THEMIS upon TCR activation in thymocytes. Interacts with TESPA1; the association is increased with prolonged stimulation of the TCR and may facilitate the assembly of the LAT signalosome. Interacts (via C-terminal proline-rich domain (PRD)) with PLCG1 (via SH3 domain); this interaction leads to guanine nucleotide exchange from PlCG1 to DNM1 and enhances DNM1-dependent endocytosis. It depends on Ca(2+) as a cofactor. Post-translationally, ubiquitinated by CBLB in activated T-cells. In terms of processing, tyrosine phosphorylated in response to signaling via activated FLT3, KIT and PDGFRA. Tyrosine phosphorylated by activated FGFR1, FGFR2, FGFR3 and FGFR4. Tyrosine phosphorylated by activated FLT1 and KDR. Tyrosine phosphorylated by activated PDGFRB. The receptor-mediated activation of PLCG1 involves its phosphorylation by tyrosine kinases, in response to ligation of a variety of growth factor receptors and immune system receptors. For instance, SYK phosphorylates and activates PLCG1 in response to ligation of the B-cell receptor. May be dephosphorylated by PTPRJ. Phosphorylated by ITK and TXK on Tyr-783 upon TCR activation in T-cells.

The protein localises to the cell projection. Its subcellular location is the lamellipodium. It localises to the ruffle. It catalyses the reaction a 1,2-diacyl-sn-glycero-3-phospho-(1D-myo-inositol-4,5-bisphosphate) + H2O = 1D-myo-inositol 1,4,5-trisphosphate + a 1,2-diacyl-sn-glycerol + H(+). It carries out the reaction a 1,2-diacyl-sn-glycero-3-phospho-(1D-myo-inositol) + H2O = 1D-myo-inositol 1-phosphate + a 1,2-diacyl-sn-glycerol + H(+). With respect to regulation, activated by phosphorylation on tyrosine residues. Mediates the production of the second messenger molecules diacylglycerol (DAG) and inositol 1,4,5-trisphosphate (IP3). Plays an important role in the regulation of intracellular signaling cascades. Becomes activated in response to ligand-mediated activation of receptor-type tyrosine kinases, such as PDGFRA, PDGFRB, EGFR, FGFR1, FGFR2, FGFR3 and FGFR4. Plays a role in actin reorganization and cell migration. Guanine nucleotide exchange factor that binds the GTPase DNM1 and catalyzes the dissociation of GDP, allowing a GTP molecule to bind in its place, therefore enhancing DNM1-dependent endocytosis. This is 1-phosphatidylinositol 4,5-bisphosphate phosphodiesterase gamma-1 from Rattus norvegicus (Rat).